The primary structure comprises 285 residues: Probable enoyl-CoA hydratase echA12 (285 aa).

Belongs to the enoyl-CoA hydratase/isomerase family.

The catalysed reaction is a (3S)-3-hydroxyacyl-CoA = a (2E)-enoyl-CoA + H2O. It catalyses the reaction a 4-saturated-(3S)-3-hydroxyacyl-CoA = a (3E)-enoyl-CoA + H2O. Could possibly oxidize fatty acids using specific components. The polypeptide is Probable enoyl-CoA hydratase echA12 (echA12) (Mycobacterium bovis (strain ATCC BAA-935 / AF2122/97)).